A 267-amino-acid polypeptide reads, in one-letter code: Apolipoprotein A-I (267 aa).

An N-terminal signal peptide occupies residues 1-18; it reads MKAAVLTLAVLFLTGSQA. Repeat copies occupy residues 68–89 and 90–111. The 10 X approximate tandem repeats stretch occupies residues 68-267; the sequence is LKLLDNWDSL…EEYAKKLSSQ (200 aa). The residue at position 110 (Met110) is a Methionine sulfoxide. The 3; half-length repeat unit spans residues 112–122; that stretch reads KDLEEVKAKVQ. A run of 5 repeats spans residues 123–144, 145–166, 167–188, 189–210, and 211–232. The 9; half-length repeat unit spans residues 233–243; sequence PALEDLRQGLL. Repeat unit 10 spans residues 244 to 267; it reads PVLESFKVSFLSALEEYAKKLSSQ.

This sequence belongs to the apolipoprotein A1/A4/E family. In terms of assembly, homodimer. Interacts with APOA1BP and CLU. Component of a sperm activating protein complex (SPAP), consisting of APOA1, an immunoglobulin heavy chain, an immunoglobulin light chain and albumin. Interacts with NDRG1. Interacts with SCGB3A2. Interacts with NAXE and YJEFN3. In terms of processing, glycosylated. Post-translationally, palmitoylated. Phosphorylation sites are present in the extracellular medium.

The protein resides in the secreted. Functionally, participates in the reverse transport of cholesterol from tissues to the liver for excretion by promoting cholesterol efflux from tissues and by acting as a cofactor for the lecithin cholesterol acyltransferase (LCAT). As part of the SPAP complex, activates spermatozoa motility. The protein is Apolipoprotein A-I (APOA1) of Cebus imitator (Panamanian white-faced capuchin).